The chain runs to 20 residues: Maximin-Ht (20 aa).

This sequence belongs to the bombinin family. Expressed by the skin glands.

Its subcellular location is the secreted. Functionally, has antimicrobial activity. In Bombina maxima (Giant fire-bellied toad), this protein is Maximin-Ht.